Consider the following 189-residue polypeptide: MVAETVAIAVWAMLPAYVPNNVAVLAGGGRPIDGGRTLDKLTDEDGVLYDENRILGDGKTWRGTAFGTAAGVVLALLLNQLQPFVAGTVGVPQFPIAAAVALAFGAMLGDILASFLKRRTGRQRGAAFPGVDQLDFVIVSLALTAIVATGWFLATFTLPVLVAIFVLTPVLHVSTNGLAYAFGLKDEPW.

The next 5 helical transmembrane spans lie at Val6–Ala26, Gly71–Val91, Ile96–Leu116, Gly125–Ala145, and Val162–Leu184.

Belongs to the CDP-archaeol synthase family. Requires Mg(2+) as cofactor.

The protein localises to the cell membrane. The catalysed reaction is 2,3-bis-O-(geranylgeranyl)-sn-glycerol 1-phosphate + CTP + H(+) = CDP-2,3-bis-O-(geranylgeranyl)-sn-glycerol + diphosphate. It functions in the pathway membrane lipid metabolism; glycerophospholipid metabolism. Its function is as follows. Catalyzes the formation of CDP-2,3-bis-(O-geranylgeranyl)-sn-glycerol (CDP-archaeol) from 2,3-bis-(O-geranylgeranyl)-sn-glycerol 1-phosphate (DGGGP) and CTP. This reaction is the third ether-bond-formation step in the biosynthesis of archaeal membrane lipids. This is CDP-archaeol synthase from Natronomonas pharaonis (strain ATCC 35678 / DSM 2160 / CIP 103997 / JCM 8858 / NBRC 14720 / NCIMB 2260 / Gabara) (Halobacterium pharaonis).